Reading from the N-terminus, the 24-residue chain is Ascaphin-3 (24 aa).

Expressed by the skin glands.

It is found in the secreted. In terms of biological role, antimicrobial peptide that shows higher potency against Gram-negative bacteria than against Gram-positive bacteria. Has a very week hemolytic activity. The chain is Ascaphin-3 from Ascaphus truei (Coastal tailed frog).